The primary structure comprises 254 residues: Winged helix repair factor 1 (254 aa).

A Bipartite nuclear localization signal motif is present at residues 4–21; sequence KRRLLASEAFGVKRRRAP. Winged helix domain regions lie at residues 32–104, 120–179, and 180–254; these read RAGS…GIVF, PCAG…LAVP, and GAGR…LPDT.

This sequence belongs to the STK19 family. Monomer in solution. Homodimer; when bound to DNA. Component of a transcription-coupled nucleotide excision repair (TC-NER) complex composed of STK19, ERCC6, ERCC8, DDA1, DDB1, ELOF1 and UVSSA which assembles and interacts with the multiprotein RNA polymerase II complex when it stalls at DNA lesions.

The protein localises to the nucleus. DNA-binding protein which is required for efficient transcription-coupled nucleotide excision repair (TC-NER). Acts as part of a TC-NER complex which assembles and interacts with RNA polymerase II (RNAPII) when it stalls at DNA lesions. TC-NER complex subunit UVSSA binds to the GTF2H1/p62 subunit of the TFIIH transcription factor complex, tethering TFIIH to the TC-NER complex. WHR1/STK19 then interacts with the XPD helicase subunit of TFIIH which guides TFIIH to DNA downstream of the stalled RNAPII, ensuring DNA repair. Directly interacts with RNAPII and also binds to downstream DNA. Promotes the timely removal of DNA damage-stalled RNAPII, allowing downstream NER factors to access DNA lesions. Required for monoubiquitination of UVSSA. Regulates repositioning and stabilization of UVSSA within the TC-NER complex. Stimulates ubiquitination of RNAPII complex member RBP1. Also binds to RNA and regulates the expression levels of many mRNAs. The protein is Winged helix repair factor 1 of Mus musculus (Mouse).